The following is a 66-amino-acid chain: Potassium channel toxin alpha-KTx 27.3 (66 aa).

The first 17 residues, 1–17 (MKLMWLLFLCVLAFSIA), serve as a signal peptide directing secretion.

It belongs to the short scorpion toxin superfamily. Potassium channel inhibitor family. Alpha-KTx 27 subfamily. In terms of processing, contains 4 disulfide bonds. In terms of tissue distribution, expressed by the venom gland.

It is found in the secreted. The polypeptide is Potassium channel toxin alpha-KTx 27.3 (Lychas mucronatus (Chinese swimming scorpion)).